We begin with the raw amino-acid sequence, 571 residues long: Phosphoenolpyruvate-protein phosphotransferase (571 aa).

The active-site Tele-phosphohistidine intermediate is His203. Positions 306 and 342 each coordinate phosphoenolpyruvate. The Mg(2+) site is built by Glu429 and Asp453. Residues 452–453 (ND) and Arg463 each bind phosphoenolpyruvate. The Proton donor role is filled by Cys500.

It belongs to the PEP-utilizing enzyme family. As to quaternary structure, homodimer. The cofactor is Mg(2+).

Its subcellular location is the cytoplasm. The enzyme catalyses L-histidyl-[protein] + phosphoenolpyruvate = N(pros)-phospho-L-histidyl-[protein] + pyruvate. General (non sugar-specific) component of the phosphoenolpyruvate-dependent sugar phosphotransferase system (sugar PTS). This major carbohydrate active-transport system catalyzes the phosphorylation of incoming sugar substrates concomitantly with their translocation across the cell membrane. Enzyme I transfers the phosphoryl group from phosphoenolpyruvate (PEP) to the phosphoryl carrier protein (HPr). This is Phosphoenolpyruvate-protein phosphotransferase (ptsI) from Chlamydia pneumoniae (Chlamydophila pneumoniae).